A 514-amino-acid chain; its full sequence is Na(+)/H(+) antiporter NhaB (514 aa).

12 helical membrane-spanning segments follow: residues 23–43 (LALL…PFIA), 63–83 (PLLP…TSAA), 97–117 (LLLM…LFIF), 120–140 (LLLS…AAAF), 144–164 (FLDA…FYGI), 202–222 (LMMH…VGEP), 238–258 (FFLR…LTCM), 303–323 (AIIG…VGLI), 357–377 (LTVF…APII), 391–411 (LFYL…VGTI), 447–467 (ATPN…APLI), and 475–495 (VWMA…CVEF).

It belongs to the NhaB Na(+)/H(+) (TC 2.A.34) antiporter family.

Its subcellular location is the cell inner membrane. It carries out the reaction 2 Na(+)(in) + 3 H(+)(out) = 2 Na(+)(out) + 3 H(+)(in). Na(+)/H(+) antiporter that extrudes sodium in exchange for external protons. The protein is Na(+)/H(+) antiporter NhaB of Salmonella heidelberg (strain SL476).